A 639-amino-acid polypeptide reads, in one-letter code: 1-deoxy-D-xylulose-5-phosphate synthase (639 aa).

Thiamine diphosphate is bound by residues H79 and 120–122 (AHS). Position 151 (D151) interacts with Mg(2+). Thiamine diphosphate-binding positions include 152-153 (GA), N180, Y289, and E371. Mg(2+) is bound at residue N180.

It belongs to the transketolase family. DXPS subfamily. As to quaternary structure, homodimer. Mg(2+) serves as cofactor. The cofactor is thiamine diphosphate.

It carries out the reaction D-glyceraldehyde 3-phosphate + pyruvate + H(+) = 1-deoxy-D-xylulose 5-phosphate + CO2. It participates in metabolic intermediate biosynthesis; 1-deoxy-D-xylulose 5-phosphate biosynthesis; 1-deoxy-D-xylulose 5-phosphate from D-glyceraldehyde 3-phosphate and pyruvate: step 1/1. Its function is as follows. Catalyzes the acyloin condensation reaction between C atoms 2 and 3 of pyruvate and glyceraldehyde 3-phosphate to yield 1-deoxy-D-xylulose-5-phosphate (DXP). The chain is 1-deoxy-D-xylulose-5-phosphate synthase from Allorhizobium ampelinum (strain ATCC BAA-846 / DSM 112012 / S4) (Agrobacterium vitis (strain S4)).